A 236-amino-acid polypeptide reads, in one-letter code: Orotidine 5'-phosphate decarboxylase (236 aa).

Substrate is bound by residues Asp16, Lys38, 65–74 (DLKLHDIGNT), Thr123, Arg184, Gln193, Gly213, and Arg214. Lys67 acts as the Proton donor in catalysis.

It belongs to the OMP decarboxylase family. Type 1 subfamily. In terms of assembly, homodimer.

It carries out the reaction orotidine 5'-phosphate + H(+) = UMP + CO2. The protein operates within pyrimidine metabolism; UMP biosynthesis via de novo pathway; UMP from orotate: step 2/2. Catalyzes the decarboxylation of orotidine 5'-monophosphate (OMP) to uridine 5'-monophosphate (UMP). The polypeptide is Orotidine 5'-phosphate decarboxylase (Methylobacterium sp. (strain 4-46)).